Consider the following 821-residue polypeptide: V-type proton ATPase subunit a3 (821 aa).

Position 2 is an N-acetylalanine (A2). Residues A2–T421 lie on the Cytoplasmic side of the membrane. A coiled-coil region spans residues K97–A144. S174 is subject to Phosphoserine. Residues F422 to A442 form a helical membrane-spanning segment. Topologically, residues T443–R469 are vacuolar. Residues Y470 to F490 traverse the membrane as a helical segment. Residues S491–K548 are Cytoplasmic-facing. Residues M549–A569 form a helical membrane-spanning segment. At R570–Q581 the chain is on the vacuolar side. Residues F582 to I602 form a helical membrane-spanning segment. Residues K603–Q640 lie on the Cytoplasmic side of the membrane. The chain crosses the membrane as a helical span at residues L641–I661. Residues L662–P758 are Vacuolar-facing. A helical membrane pass occupies residues L759–M779. The Cytoplasmic portion of the chain corresponds to E780–E821.

The protein belongs to the V-ATPase 116 kDa subunit family. As to quaternary structure, V-ATPase is a heteromultimeric enzyme composed of a peripheral catalytic V1 complex (components A to H) attached to an integral membrane V0 proton pore complex (components: a, c, c'', d and e). In terms of tissue distribution, expressed in etiolated seedlings hypocotyls.

Its subcellular location is the vacuole membrane. In terms of biological role, essential component of the vacuolar proton pump (V-ATPase), a multimeric enzyme that catalyzes the translocation of protons across the membranes. Required for assembly and activity of the V-ATPase. Involved in vacuolar nutrient storage (e.g. accumulation and storage of nitrate) and in tolerance to some toxic ions (e.g. zinc ions sequestration in vacuoles). The protein is V-type proton ATPase subunit a3 (VHA-a3) of Arabidopsis thaliana (Mouse-ear cress).